The primary structure comprises 664 residues: Glycine--tRNA ligase beta subunit (664 aa).

The protein belongs to the class-II aminoacyl-tRNA synthetase family. Tetramer of two alpha and two beta subunits.

The protein resides in the cytoplasm. It catalyses the reaction tRNA(Gly) + glycine + ATP = glycyl-tRNA(Gly) + AMP + diphosphate. The sequence is that of Glycine--tRNA ligase beta subunit from Rickettsia africae (strain ESF-5).